The following is a 64-amino-acid chain: Large ribosomal subunit protein bL28 (64 aa).

Belongs to the bacterial ribosomal protein bL28 family.

The sequence is that of Large ribosomal subunit protein bL28 from Desulfotalea psychrophila (strain LSv54 / DSM 12343).